Reading from the N-terminus, the 356-residue chain is Malate dehydrogenase, glyoxysomal (356 aa).

The N-terminal 36 residues, M1 to C36, are a transit peptide targeting the glyoxysome. Residues G51 to G57 and D77 each bind NAD(+). Substrate is bound by residues R124 and R130. NAD(+)-binding positions include N137 and I160–N162. Residues N162 and R196 each contribute to the substrate site. Residue H220 is the Proton acceptor of the active site. M271 lines the NAD(+) pocket.

This sequence belongs to the LDH/MDH superfamily. MDH type 1 family. In terms of assembly, homodimer.

The protein resides in the glyoxysome. It catalyses the reaction (S)-malate + NAD(+) = oxaloacetate + NADH + H(+). The sequence is that of Malate dehydrogenase, glyoxysomal from Oryza sativa subsp. japonica (Rice).